We begin with the raw amino-acid sequence, 98 residues long: NADH-ubiquinone oxidoreductase chain 4L (98 aa).

3 consecutive transmembrane segments (helical) span residues 1–21 (MSMV…GLLM), 29–49 (SLLC…ATIL), and 61–81 (IILL…LVTV).

This sequence belongs to the complex I subunit 4L family. As to quaternary structure, core subunit of respiratory chain NADH dehydrogenase (Complex I) which is composed of 45 different subunits.

It is found in the mitochondrion inner membrane. It carries out the reaction a ubiquinone + NADH + 5 H(+)(in) = a ubiquinol + NAD(+) + 4 H(+)(out). Core subunit of the mitochondrial membrane respiratory chain NADH dehydrogenase (Complex I) which catalyzes electron transfer from NADH through the respiratory chain, using ubiquinone as an electron acceptor. Part of the enzyme membrane arm which is embedded in the lipid bilayer and involved in proton translocation. This chain is NADH-ubiquinone oxidoreductase chain 4L (MT-ND4L), found in Pusa caspica (Caspian seal).